The primary structure comprises 111 residues: WAP four-disulfide core domain protein 12 (111 aa).

A signal peptide spans 1–23 (MRSSRFLVLMVSLALVTLVASEG). The WAP domain maps to 27-74 (NTEKPGVCPADNVRCIKSDPPQCHTDQDCQGIRKCCYLHCGFKCVIPV). Intrachain disulfides connect Cys34-Cys62, Cys41-Cys66, Cys49-Cys61, and Cys55-Cys70.

It is found in the secreted. Functionally, antibacterial protein. Putative acid-stable proteinase inhibitor. In Saimiri boliviensis boliviensis (Bolivian squirrel monkey), this protein is WAP four-disulfide core domain protein 12 (WFDC12).